We begin with the raw amino-acid sequence, 332 residues long: DNA-directed RNA polymerase subunit alpha (332 aa).

The alpha N-terminal domain (alpha-NTD) stretch occupies residues 1–231; it reads MQTNLLKPKT…EQLAVFAQLD (231 aa). The segment at 252–332 is alpha C-terminal domain (alpha-CTD); it reads FDPILLRPVD…NWPPAGLEKR (81 aa).

This sequence belongs to the RNA polymerase alpha chain family. As to quaternary structure, homodimer. The RNAP catalytic core consists of 2 alpha, 1 beta, 1 beta' and 1 omega subunit. When a sigma factor is associated with the core the holoenzyme is formed, which can initiate transcription.

The catalysed reaction is RNA(n) + a ribonucleoside 5'-triphosphate = RNA(n+1) + diphosphate. DNA-dependent RNA polymerase catalyzes the transcription of DNA into RNA using the four ribonucleoside triphosphates as substrates. The protein is DNA-directed RNA polymerase subunit alpha of Delftia acidovorans (strain DSM 14801 / SPH-1).